Consider the following 180-residue polypeptide: Ribosome maturation factor RimM (180 aa).

The 73-residue stretch at 108–180 (PDEYYWVDLE…LIVVDWDPDF (73 aa)) folds into the PRC barrel domain.

The protein belongs to the RimM family. As to quaternary structure, binds ribosomal protein uS19.

The protein resides in the cytoplasm. In terms of biological role, an accessory protein needed during the final step in the assembly of 30S ribosomal subunit, possibly for assembly of the head region. Essential for efficient processing of 16S rRNA. May be needed both before and after RbfA during the maturation of 16S rRNA. It has affinity for free ribosomal 30S subunits but not for 70S ribosomes. In Xanthomonas euvesicatoria pv. vesicatoria (strain 85-10) (Xanthomonas campestris pv. vesicatoria), this protein is Ribosome maturation factor RimM.